We begin with the raw amino-acid sequence, 65 residues long: UPF0434 protein BRADO0313 (65 aa).

Belongs to the UPF0434 family.

The protein is UPF0434 protein BRADO0313 of Bradyrhizobium sp. (strain ORS 278).